The chain runs to 181 residues: Adenine phosphoribosyltransferase (181 aa).

The protein belongs to the purine/pyrimidine phosphoribosyltransferase family. In terms of assembly, homodimer.

It localises to the cytoplasm. It carries out the reaction AMP + diphosphate = 5-phospho-alpha-D-ribose 1-diphosphate + adenine. It functions in the pathway purine metabolism; AMP biosynthesis via salvage pathway; AMP from adenine: step 1/1. Catalyzes a salvage reaction resulting in the formation of AMP, that is energically less costly than de novo synthesis. The sequence is that of Adenine phosphoribosyltransferase (Aprt) from Drosophila pseudoobscura pseudoobscura (Fruit fly).